Consider the following 607-residue polypeptide: Protein NRT1/ PTR FAMILY 1.2 (607 aa).

10 consecutive transmembrane segments (helical) span residues 65 to 85, 96 to 116, 138 to 158, 185 to 205, 215 to 235, 374 to 394, 418 to 438, 460 to 480, 496 to 516, and 544 to 564; these read TNVLFMWSAASNFTPLLGAFL, ISIASLSSFLGMVLLWLTAML, ASQLALLYSAFALISIGSGGI, FFGWYYASSAVAVLIAFTGIV, IGFGVPAVLMLIAALLFILAS, VPAGSFGMFTIIALALWVILY, MGLGLFMSFLAMAISAMVESF, AMWLVPQYVLHGLAEALTAIG, IAASLFGLGMAVASLLASVVL, and YYWVLAIMSFINVIYYVICSW. Ser601 carries the phosphoserine modification.

This sequence belongs to the major facilitator superfamily. Proton-dependent oligopeptide transporter (POT/PTR) (TC 2.A.17) family. Expressed in shoots, stems, leaves, flowers and siliques. Mainly detected in larger expanded leaves, in the companion cells of major veins.

The protein resides in the cell membrane. Functionally, low-affinity nitrate transporter involved in xylem-to-phloem transfer for redistributing nitrate into developing leaves. Not involved in dipeptides transport. This Arabidopsis thaliana (Mouse-ear cress) protein is Protein NRT1/ PTR FAMILY 1.2 (NPF1.2).